A 231-amino-acid chain; its full sequence is ATP-dependent dethiobiotin synthetase BioD 2 (231 aa).

13-18 (SVGKTV) is an ATP binding site. T17 contributes to the Mg(2+) binding site. Residue K38 is part of the active site. ATP is bound by residues D55, 112–115 (EGTG), 172–173 (NR), 201–203 (PYL), and Q208. The Mg(2+) site is built by D55 and E112.

It belongs to the dethiobiotin synthetase family. As to quaternary structure, homodimer. It depends on Mg(2+) as a cofactor.

The protein resides in the cytoplasm. It carries out the reaction (7R,8S)-7,8-diammoniononanoate + CO2 + ATP = (4R,5S)-dethiobiotin + ADP + phosphate + 3 H(+). It participates in cofactor biosynthesis; biotin biosynthesis; biotin from 7,8-diaminononanoate: step 1/2. Catalyzes a mechanistically unusual reaction, the ATP-dependent insertion of CO2 between the N7 and N8 nitrogen atoms of 7,8-diaminopelargonic acid (DAPA, also called 7,8-diammoniononanoate) to form a ureido ring. This chain is ATP-dependent dethiobiotin synthetase BioD 2, found in Escherichia coli O157:H7.